Reading from the N-terminus, the 336-residue chain is Large ribosomal subunit protein uL3 (336 aa).

The segment at 1 to 34 (MVRHHQPRKGSVAFSPRKRAAKETPRIKSWPQND) is disordered.

The protein belongs to the universal ribosomal protein uL3 family. Part of the 50S ribosomal subunit. Forms a cluster with proteins L14 and L24e.

Its function is as follows. One of the primary rRNA binding proteins, it binds directly near the 3'-end of the 23S rRNA, where it nucleates assembly of the 50S subunit. The sequence is that of Large ribosomal subunit protein uL3 from Methanobrevibacter smithii (strain ATCC 35061 / DSM 861 / OCM 144 / PS).